Consider the following 82-residue polypeptide: Exodeoxyribonuclease 7 small subunit (82 aa).

It belongs to the XseB family. In terms of assembly, heterooligomer composed of large and small subunits.

The protein resides in the cytoplasm. The enzyme catalyses Exonucleolytic cleavage in either 5'- to 3'- or 3'- to 5'-direction to yield nucleoside 5'-phosphates.. Its function is as follows. Bidirectionally degrades single-stranded DNA into large acid-insoluble oligonucleotides, which are then degraded further into small acid-soluble oligonucleotides. In Coxiella burnetii (strain CbuG_Q212) (Coxiella burnetii (strain Q212)), this protein is Exodeoxyribonuclease 7 small subunit.